Here is a 526-residue protein sequence, read N- to C-terminus: Fumitremorgin C synthase (526 aa).

Residues 4 to 24 form a helical membrane-spanning segment; that stretch reads LPLSPAVLFLTITLPILYFWI. C443 contributes to the heme binding site.

It belongs to the cytochrome P450 family. Heme serves as cofactor.

It is found in the membrane. It catalyses the reaction tryprostatin A + reduced [NADPH--hemoprotein reductase] + O2 = fumitremorgin C + oxidized [NADPH--hemoprotein reductase] + 2 H2O + H(+). It functions in the pathway mycotoxin biosynthesis. Functionally, cytochrome P450 monooxygenase; part of the gene cluster that mediates the biosynthesis of fumitremorgins, indole alkaloids that carry not only intriguing chemical structures, but also interesting biological and pharmacological activities. The biosynthesis of fumitremorgin-type alkaloids begins by condensation of the two amino acids L-tryptophan and L-proline to brevianamide F, catalyzed by the non-ribosomal peptide synthetase ftmPS/ftmA. Brevianamide F is then prenylated by the prenyltransferase ftmPT1/ftmB in the presence of dimethylallyl diphosphate, resulting in the formation of tryprostatin B. The three cytochrome P450 monooxygenases, ftmP450-1/ftmC, ftmP450-2/ftmE and ftmP450-3/FtmG, are responsible for the conversion of tryprostatin B to 6-hydroxytryprostatin B, tryprostatin A to fumitremorgin C and fumitremorgin C to 12,13-dihydroxyfumitremorgin C, respectively. The putative methyltransferase ftmMT/ftmD is expected for the conversion of 6-hydroxytryprostatin B to tryprostatin A. FtmPT2/FtmH catalyzes the prenylation of 12,13-dihydroxyfumitre-morgin C in the presence of dimethylallyl diphosphate, resulting in the formation of fumitremorgin B. Fumitremorgin B is further converted to verruculogen by ftmOx1/ftmF via the insertion of an endoperoxide bond between the two prenyl moieties. Finally, verruculogen is further converted to fumitremorgin A by the verruculogen prenyltransferase ftmPT3. In Neosartorya fischeri (strain ATCC 1020 / DSM 3700 / CBS 544.65 / FGSC A1164 / JCM 1740 / NRRL 181 / WB 181) (Aspergillus fischerianus), this protein is Fumitremorgin C synthase.